The following is a 127-amino-acid chain: Large ribosomal subunit protein bL20 (127 aa).

The protein belongs to the bacterial ribosomal protein bL20 family.

Functionally, binds directly to 23S ribosomal RNA and is necessary for the in vitro assembly process of the 50S ribosomal subunit. It is not involved in the protein synthesizing functions of that subunit. This chain is Large ribosomal subunit protein bL20, found in Streptomyces griseus subsp. griseus (strain JCM 4626 / CBS 651.72 / NBRC 13350 / KCC S-0626 / ISP 5235).